A 257-amino-acid chain; its full sequence is Ribonuclease HII (257 aa).

The RNase H type-2 domain maps to 72–257 (TYIAGIDEVG…FAPIKDMIQK (186 aa)). Positions 78, 79, and 170 each coordinate a divalent metal cation.

Belongs to the RNase HII family. Requires Mn(2+) as cofactor. Mg(2+) serves as cofactor.

It is found in the cytoplasm. It carries out the reaction Endonucleolytic cleavage to 5'-phosphomonoester.. In terms of biological role, endonuclease that specifically degrades the RNA of RNA-DNA hybrids. The sequence is that of Ribonuclease HII from Bacillus cereus (strain B4264).